The sequence spans 257 residues: MMSNDIFPNKFKAALAAQRIQIGCWSALANPISTEVLGLAGFDWLVLDGEHAPNDISTFIPQLMALKGSASAPVVRVPTNEPVIIKRLLDIGFYNFLIPFVETEEEAVRAVASTRYPPEGIRGVSVSHRANMFGTVPDYFAQSNKNITILVQIESQQGVDNVDAIAATEGVDGIFVGPSDLAAALGHLGNASHPEVQKTIQHIFARAKAHGKPCGILAPVEADARRYLEWGATFVAVGSDLGVFRSATQKLADAFKK.

Residue His51 is the Proton acceptor of the active site. Gln152 contacts substrate. Glu154 is a Mg(2+) binding site. Residues Ser179 and Asp180 each coordinate substrate. Residue Asp180 participates in Mg(2+) binding.

It belongs to the HpcH/HpaI aldolase family. KDGluc aldolase subfamily. Homohexamer; trimer of dimers. It depends on Mg(2+) as a cofactor.

It catalyses the reaction 5-dehydro-4-deoxy-D-glucarate = 2-hydroxy-3-oxopropanoate + pyruvate. It carries out the reaction 2-dehydro-3-deoxy-D-glucarate = 2-hydroxy-3-oxopropanoate + pyruvate. The protein operates within carbohydrate acid metabolism; galactarate degradation; D-glycerate from galactarate: step 2/3. Catalyzes the reversible retro-aldol cleavage of both 5-keto-4-deoxy-D-glucarate and 2-keto-3-deoxy-D-glucarate to pyruvate and tartronic semialdehyde. The sequence is that of 5-keto-4-deoxy-D-glucarate aldolase from Citrobacter koseri (strain ATCC BAA-895 / CDC 4225-83 / SGSC4696).